The primary structure comprises 284 residues: Homeobox protein SMOX-5 (284 aa).

Residues 37-96 constitute a DNA-binding region (homeobox); sequence RRKTRTTFSNCQLNELENNFNRQRYLTPTDRDRIAKHLGLTNTQVITWFQNRRAKLKREA. The interval 117-172 is disordered; it reads LSLSDHDHEETQIDDENEQGDNNNDDDGDDNDVEEDDGEEQEKNHTKYLTQPPSIS. Residues 128-156 show a composition bias toward acidic residues; it reads QIDDENEQGDNNNDDDGDDNDVEEDDGEE.

The protein resides in the nucleus. This chain is Homeobox protein SMOX-5 (SMOX-5), found in Schistosoma mansoni (Blood fluke).